The primary structure comprises 810 residues: Coiled-coil domain-containing protein 15 (810 aa).

3 coiled-coil regions span residues 65–89 (VVEE…RQVR), 160–189 (DGEN…SFKT), and 638–669 (MDIE…EQQR).

In terms of assembly, interacts with POC5, POC1B, CETN2 and FAM161A.

It localises to the cytoplasm. Its subcellular location is the cytoskeleton. The protein localises to the microtubule organizing center. It is found in the centrosome. The protein resides in the centriole. It localises to the centriolar satellite. In terms of biological role, plays an important role in primary cilium assembly, maintenance, and length regulation. Interacts with centriole inner scaffold proteins to promote proper centriole size and integrity and assembly of functional cilia. Required for the recruitment of both the inner scaffold protein POC1B and the distal SFI1/CETN2 complex to centrioles. This chain is Coiled-coil domain-containing protein 15 (Ccdc15), found in Mus musculus (Mouse).